The following is a 639-amino-acid chain: Poly(A)-specific ribonuclease PARN (639 aa).

Residues aspartate 28 and glutamate 30 each contribute to the a divalent metal cation site. Phosphoserine is present on residues serine 163 and serine 167. The R3H domain maps to 178–245 (KKFIDQVVEK…ERYIVISKVD (68 aa)). At lysine 220 the chain carries N6-acetyllysine. Residues aspartate 292 and aspartate 382 each contribute to the a divalent metal cation site. N6-acetyllysine is present on lysine 499. Serine 530 bears the Phosphoserine mark. Serine 557 carries the phosphoserine; by MAPKAPK2 modification. Positions 563–611 (TVGKRNLSPSQEEAGLEDGVSGEISDTELEQTDSCAEPLSEGRKKAKKL) are disordered. 5 positions are modified to phosphoserine: serine 583, serine 587, serine 619, serine 623, and serine 628. Threonine 631 carries the post-translational modification Phosphothreonine.

Belongs to the CAF1 family. In terms of assembly, homodimer. Found in a mRNA decay complex with RENT1, RENT2 and RENT3B. Interacts with KHSRP. Interacts with CELF1/CUGBP1. Interacts with ZC3HAV1 in an RNA-independent manner. Interacts with DHX36. Mg(2+) serves as cofactor. Phosphorylation by MAPKAPK2, preventing GADD45A mRNA degradation after genotoxic stress.

The protein localises to the nucleus. The protein resides in the cytoplasm. Its subcellular location is the nucleolus. The catalysed reaction is Exonucleolytic cleavage of poly(A) to 5'-AMP.. 3'-exoribonuclease that has a preference for poly(A) tails of mRNAs, thereby efficiently degrading poly(A) tails. Exonucleolytic degradation of the poly(A) tail is often the first step in the decay of eukaryotic mRNAs and is also used to silence certain maternal mRNAs translationally during oocyte maturation and early embryonic development. Interacts with both the 3'-end poly(A) tail and the 5'-end cap structure during degradation, the interaction with the cap structure being required for an efficient degradation of poly(A) tails. Involved in nonsense-mediated mRNA decay, a critical process of selective degradation of mRNAs that contain premature stop codons. Also involved in degradation of inherently unstable mRNAs that contain AU-rich elements (AREs) in their 3'-UTR, possibly via its interaction with KHSRP. Probably mediates the removal of poly(A) tails of AREs mRNAs, which constitutes the first step of destabilization. Also able to recognize poly(A) tails of microRNAs such as MIR21 and H/ACA box snoRNAs (small nucleolar RNAs) leading to microRNAs degradation or snoRNA increased stability. The polypeptide is Poly(A)-specific ribonuclease PARN (PARN) (Pongo abelii (Sumatran orangutan)).